Reading from the N-terminus, the 1242-residue chain is Receptor-type adenylate cyclase GRESAG 4.1 (1242 aa).

At methionine 1–histidine 39 the chain is on the cytoplasmic side. The helical transmembrane segment at tyrosine 40 to alanine 60 threads the bilayer. Residues aspartate 61–asparagine 862 lie on the Extracellular side of the membrane. 11 N-linked (GlcNAc...) asparagine glycosylation sites follow: asparagine 116, asparagine 289, asparagine 318, asparagine 338, asparagine 401, asparagine 534, asparagine 563, asparagine 603, asparagine 702, asparagine 741, and asparagine 818. The helical transmembrane segment at phenylalanine 863–proline 883 threads the bilayer. Topologically, residues alanine 884 to tyrosine 1242 are cytoplasmic. Residues threonine 901 to glutamate 1056 enclose the Guanylate cyclase domain. Positions 906 and 949 each coordinate Mg(2+).

Belongs to the adenylyl cyclase class-3 family. Requires Mg(2+) as cofactor.

The protein resides in the membrane. The enzyme catalyses ATP = 3',5'-cyclic AMP + diphosphate. Functionally, could act as a receptor for an unknown ligand. The sequence is that of Receptor-type adenylate cyclase GRESAG 4.1 (GRESAG 4.1) from Trypanosoma brucei brucei.